Reading from the N-terminus, the 142-residue chain is MKTFVAKPETVKRDWYIVDAEGKTLGRIATEIAARLRGKHKAEYTPHVDTGDYIIVVNAEKVHVTGKKFTDKMYHAHSGFPGGIKSISFDKLIQRKPEMVIEAAVKGMLPKGPLGRAMFRKLKVYAGAEHAHAAQQPQVLDI.

This sequence belongs to the universal ribosomal protein uL13 family. As to quaternary structure, part of the 50S ribosomal subunit.

Functionally, this protein is one of the early assembly proteins of the 50S ribosomal subunit, although it is not seen to bind rRNA by itself. It is important during the early stages of 50S assembly. The protein is Large ribosomal subunit protein uL13 of Aeromonas hydrophila subsp. hydrophila (strain ATCC 7966 / DSM 30187 / BCRC 13018 / CCUG 14551 / JCM 1027 / KCTC 2358 / NCIMB 9240 / NCTC 8049).